The chain runs to 168 residues: Peptide deformylase (168 aa).

Residues Cys91 and His133 each coordinate Fe cation. Glu134 is an active-site residue. Fe cation is bound at residue His137.

Belongs to the polypeptide deformylase family. Fe(2+) is required as a cofactor.

The enzyme catalyses N-terminal N-formyl-L-methionyl-[peptide] + H2O = N-terminal L-methionyl-[peptide] + formate. Its function is as follows. Removes the formyl group from the N-terminal Met of newly synthesized proteins. Requires at least a dipeptide for an efficient rate of reaction. N-terminal L-methionine is a prerequisite for activity but the enzyme has broad specificity at other positions. This Endomicrobium trichonymphae protein is Peptide deformylase.